An 814-amino-acid polypeptide reads, in one-letter code: Immunoglobulin superfamily DCC subclass member 3 (814 aa).

The first 35 residues, 1 to 35, serve as a signal peptide directing secretion; sequence MAVQRAASPRRPPAPLWPRLLLPLLLLLLPAPSEG. Ig-like C2-type domains are found at residues 36–139, 140–220, 238–321, and 329–416; these read LGHS…ATMS, DFHV…IRIS, PAIL…RTAQ, and PAEF…ARLT. Intrachain disulfides connect C63-C117 and C160-C209. N-linked (GlcNAc...) asparagine glycosylation is present at N93. A glycan (N-linked (GlcNAc...) asparagine) is linked at N246. Disulfide bonds link C259–C307 and C351–C400. 2 N-linked (GlcNAc...) asparagine glycosylation sites follow: N381 and N382. Fibronectin type-III domains are found at residues 426 to 520 and 523 to 618; these read PPRN…TLGE and APPP…ASER. Residues N580, N604, and N634 are each glycosylated (N-linked (GlcNAc...) asparagine). A helical transmembrane segment spans residues 641-661; sequence IVIGIHIGVTCIIFCVLFLLF. Disordered regions lie at residues 722 to 743 and 762 to 814; these read PPAS…APAP and GKTT…HSEQ. Low complexity predominate over residues 770–781; the sequence is TEATAPCAGLAA.

Belongs to the immunoglobulin superfamily. DCC family.

Its subcellular location is the membrane. In Homo sapiens (Human), this protein is Immunoglobulin superfamily DCC subclass member 3 (IGDCC3).